We begin with the raw amino-acid sequence, 248 residues long: Probable transcriptional regulatory protein RHECIAT_CH0003714 (248 aa).

Belongs to the TACO1 family.

It localises to the cytoplasm. This is Probable transcriptional regulatory protein RHECIAT_CH0003714 from Rhizobium etli (strain CIAT 652).